The following is a 192-amino-acid chain: Pyruvate kinase (192 aa).

Position 41 (arginine 41) interacts with substrate. 4 residues coordinate K(+): asparagine 43, serine 45, aspartate 75, and threonine 76. 43–46 (NFSH) lines the ATP pocket.

This sequence belongs to the pyruvate kinase family. Requires Mg(2+) as cofactor. K(+) serves as cofactor.

It catalyses the reaction pyruvate + ATP = phosphoenolpyruvate + ADP + H(+). It participates in carbohydrate degradation; glycolysis; pyruvate from D-glyceraldehyde 3-phosphate: step 5/5. In Spiroplasma citri, this protein is Pyruvate kinase (pyk).